Here is a 136-residue protein sequence, read N- to C-terminus: 6,7-dimethyl-8-ribityllumazine synthase (136 aa).

Residues phenylalanine 11, 43–45, and 67–69 each bind 5-amino-6-(D-ribitylamino)uracil; these read SFD and AVI. 72–73 is a binding site for (2S)-2-hydroxy-3-oxobutyl phosphate; sequence ET. The active-site Proton donor is histidine 75. Leucine 100 is a binding site for 5-amino-6-(D-ribitylamino)uracil. A (2S)-2-hydroxy-3-oxobutyl phosphate-binding site is contributed by arginine 115.

Belongs to the DMRL synthase family.

The catalysed reaction is (2S)-2-hydroxy-3-oxobutyl phosphate + 5-amino-6-(D-ribitylamino)uracil = 6,7-dimethyl-8-(1-D-ribityl)lumazine + phosphate + 2 H2O + H(+). It participates in cofactor biosynthesis; riboflavin biosynthesis; riboflavin from 2-hydroxy-3-oxobutyl phosphate and 5-amino-6-(D-ribitylamino)uracil: step 1/2. In terms of biological role, catalyzes the formation of 6,7-dimethyl-8-ribityllumazine by condensation of 5-amino-6-(D-ribitylamino)uracil with 3,4-dihydroxy-2-butanone 4-phosphate. This is the penultimate step in the biosynthesis of riboflavin. This is 6,7-dimethyl-8-ribityllumazine synthase from Picrophilus torridus (strain ATCC 700027 / DSM 9790 / JCM 10055 / NBRC 100828 / KAW 2/3).